The primary structure comprises 256 residues: Pimeloyl-[acyl-carrier protein] methyl ester esterase (256 aa).

The AB hydrolase-1 domain maps to 15-242 (HLVLLHGWGL…AAHAPFISHP (228 aa)). Residues W22, 82–83 (SL), and 143–147 (FLALQ) each bind substrate. S82 acts as the Nucleophile in catalysis. Residues D207 and H235 contribute to the active site. A substrate-binding site is contributed by H235.

Belongs to the AB hydrolase superfamily. Carboxylesterase BioH family. Monomer.

The protein resides in the cytoplasm. The catalysed reaction is 6-carboxyhexanoyl-[ACP] methyl ester + H2O = 6-carboxyhexanoyl-[ACP] + methanol + H(+). It functions in the pathway cofactor biosynthesis; biotin biosynthesis. Functionally, the physiological role of BioH is to remove the methyl group introduced by BioC when the pimeloyl moiety is complete. It allows to synthesize pimeloyl-ACP via the fatty acid synthetic pathway through the hydrolysis of the ester bonds of pimeloyl-ACP esters. This is Pimeloyl-[acyl-carrier protein] methyl ester esterase from Escherichia coli O139:H28 (strain E24377A / ETEC).